A 271-amino-acid polypeptide reads, in one-letter code: Indole-3-glycerol phosphate synthase (271 aa).

Belongs to the TrpC family.

It catalyses the reaction 1-(2-carboxyphenylamino)-1-deoxy-D-ribulose 5-phosphate + H(+) = (1S,2R)-1-C-(indol-3-yl)glycerol 3-phosphate + CO2 + H2O. The protein operates within amino-acid biosynthesis; L-tryptophan biosynthesis; L-tryptophan from chorismate: step 4/5. In Lachnoclostridium phytofermentans (strain ATCC 700394 / DSM 18823 / ISDg) (Clostridium phytofermentans), this protein is Indole-3-glycerol phosphate synthase.